The sequence spans 956 residues: Matrilin-2 (956 aa).

Positions 1–23 are cleaved as a signal peptide; sequence MEKMLVGCLLMLGQLFLVLPVDG. Residues 57 to 232 form the VWFA 1 domain; it reads DLVFIIDSSR…SQIESLTSVF (176 aa). Asn221 carries N-linked (GlcNAc...) asparagine glycosylation. EGF-like domains follow at residues 238-278, 279-319, 320-360, 361-401, 402-442, 443-483, 484-524, 525-565, 566-606, and 607-647; these read TVHM…KTCR, IQDL…KRCT, AVDY…KTCS, KIDY…KTCR, RINY…KTCS, RVDH…KTCS, RADY…KTCA, KLDS…KTCR, RKDV…KRCR, and RKNV…KHCK. Intrachain disulfides connect Cys242/Cys253, Cys249/Cys262, Cys264/Cys277, Cys283/Cys294, Cys290/Cys303, Cys305/Cys318, Cys324/Cys335, Cys331/Cys344, Cys346/Cys359, Cys365/Cys376, Cys372/Cys385, Cys387/Cys400, Cys406/Cys417, Cys413/Cys426, Cys428/Cys441, Cys447/Cys458, Cys454/Cys467, Cys469/Cys482, Cys488/Cys499, Cys495/Cys508, Cys510/Cys523, Cys529/Cys540, Cys536/Cys549, Cys551/Cys564, Cys570/Cys581, Cys577/Cys590, Cys592/Cys605, Cys611/Cys622, Cys618/Cys631, and Cys633/Cys646. In terms of domain architecture, VWFA 2 spans 655 to 830; the sequence is DLVFVIDGSK…STMGEISEKL (176 aa). N-linked (GlcNAc...) asparagine glycosylation occurs at Asn890. A coiled-coil region spans residues 917 to 955; it reads KCENLILFQNVANEEVRKLTQRLEEMTQRMEALENRLKY.

Detected in a variety of organs, including calvaria, uterus, heart and brain, as well as fibroblast and osteoblast cell lines.

It is found in the secreted. Its function is as follows. Involved in matrix assembly. The polypeptide is Matrilin-2 (Matn2) (Mus musculus (Mouse)).